The primary structure comprises 510 residues: Dentin matrix acidic phosphoprotein 1 (510 aa).

The first 16 residues, 1-16 (MKTTILLMFLWGLSCA), serve as a signal peptide directing secretion. The interval 23–510 (QNTESKSSEE…QDDNDCQDGY (488 aa)) is disordered. Composition is skewed to acidic residues over residues 61-77 (QANE…EVLG) and 101-119 (NKDD…DDDG). 3 stretches are compositionally biased toward basic and acidic residues: residues 123-180 (PEER…RPEG), 273-288 (RLPE…DSRT), and 299-328 (PDSK…RSPE). The segment covering 333 to 343 (VQDPSSESSQE) has biased composition (polar residues). The N-linked (GlcNAc...) asparagine glycan is linked to Asn351. Basic and acidic residues predominate over residues 358 to 367 (EALHESRGDN). The short motif at 364–366 (RGD) is the Cell attachment site element. Asn370 carries an N-linked (GlcNAc...) asparagine glycan. The span at 407–417 (SESHESLRSSE) shows a compositional bias: basic and acidic residues. Residues Asn427 and Asn464 are each glycosylated (N-linked (GlcNAc...) asparagine). Residues 481–499 (TEVESRKLTVDAYHNKPIG) are compositionally biased toward basic and acidic residues. Residues 500–510 (DQDDNDCQDGY) are compositionally biased toward acidic residues.

In terms of assembly, interacts with importin alpha. Post-translationally, phosphorylated in the cytosol and extracellular matrix and unphosphorylated in the nucleus. Phosphorylation is necessary for nucleocytoplasmic transport and may be catalyzed by a nuclear isoform of CK2 and can be augmented by calcium. Phosphorylated (in vitro) by FAM20C in the extracellular medium at sites within the S-x-E/pS motif. In terms of tissue distribution, expressed in fetal brain, bone and tooth particularly in odontoblast, but not in ameloblast. Not expressed in liver and skin.

Its subcellular location is the nucleus. The protein resides in the cytoplasm. It localises to the secreted. The protein localises to the extracellular space. It is found in the extracellular matrix. Functionally, may have a dual function during osteoblast differentiation. In the nucleus of undifferentiated osteoblasts, unphosphorylated form acts as a transcriptional component for activation of osteoblast-specific genes like osteocalcin. During the osteoblast to osteocyte transition phase it is phosphorylated and exported into the extracellular matrix, where it regulates nucleation of hydroxyapatite. The sequence is that of Dentin matrix acidic phosphoprotein 1 (DMP1) from Bos taurus (Bovine).